The primary structure comprises 447 residues: Methylenetetrahydrofolate--tRNA-(uracil-5-)-methyltransferase TrmFO (447 aa).

13-18 contacts FAD; it reads GAGLAG.

This sequence belongs to the MnmG family. TrmFO subfamily. It depends on FAD as a cofactor.

It is found in the cytoplasm. It catalyses the reaction uridine(54) in tRNA + (6R)-5,10-methylene-5,6,7,8-tetrahydrofolate + NADH + H(+) = 5-methyluridine(54) in tRNA + (6S)-5,6,7,8-tetrahydrofolate + NAD(+). The catalysed reaction is uridine(54) in tRNA + (6R)-5,10-methylene-5,6,7,8-tetrahydrofolate + NADPH + H(+) = 5-methyluridine(54) in tRNA + (6S)-5,6,7,8-tetrahydrofolate + NADP(+). Its function is as follows. Catalyzes the folate-dependent formation of 5-methyl-uridine at position 54 (M-5-U54) in all tRNAs. The sequence is that of Methylenetetrahydrofolate--tRNA-(uracil-5-)-methyltransferase TrmFO from Streptococcus thermophilus (strain ATCC BAA-250 / LMG 18311).